The chain runs to 919 residues: Leucine--tRNA ligase (919 aa).

A 'HIGH' region motif is present at residues 83–93; it reads PYPSGKLHMGH. Residues 670–674 carry the 'KMSKS' region motif; the sequence is KMSKS. Lysine 673 serves as a coordination point for ATP.

This sequence belongs to the class-I aminoacyl-tRNA synthetase family.

The protein localises to the cytoplasm. It carries out the reaction tRNA(Leu) + L-leucine + ATP = L-leucyl-tRNA(Leu) + AMP + diphosphate. This chain is Leucine--tRNA ligase, found in Psychrobacter cryohalolentis (strain ATCC BAA-1226 / DSM 17306 / VKM B-2378 / K5).